A 101-amino-acid chain; its full sequence is opdI (101 aa).

A helical transmembrane segment spans residues 30–49 (GGMGGALKIVFLGMMTYFIA). Positions 56 to 101 (SQHPPTDFNAPVQSVPQRAQRPSDTRLQGPVLLASNHPSGDSASPE) are disordered. 2 stretches are compositionally biased toward polar residues: residues 66 to 81 (PVQS…SDTR) and 91 to 101 (NHPSGDSASPE).

It localises to the membrane. Functionally, part of the gene cluster that mediates the biosynthesis of oxopyrrolidines, polyketide-amino acid hybrid compounds with feature structures of tetramic acid. Does not seem to play a role in oxopyrrolidines A and B biosynthesis. This Penicillium oxalicum (strain 114-2 / CGMCC 5302) (Penicillium decumbens) protein is opdI.